Here is a 948-residue protein sequence, read N- to C-terminus: Protocadherin alpha-2 (948 aa).

The first 22 residues, 1–22, serve as a signal peptide directing secretion; that stretch reads MASSIRRGLGAWTRLLSLLLLA. Residues 23–697 are Extracellular-facing; that stretch reads AWEVGSGQLR…GSEATLVDVN (675 aa). Cadherin domains lie at 30-133, 157-242, 243-350, 351-455, 456-565, and 588-678; these read QLRY…PPVF, ASDA…EPTF, AQSV…TPEV, SITS…APAF, AQPE…APAL, and GHVV…APKA. 4 N-linked (GlcNAc...) asparagine glycosylation sites follow: Asn257, Asn265, Asn362, and Asn548. The helical transmembrane segment at 698-718 threads the bilayer; sequence VYLIIAICAVSSLLVLTVLLY. Topologically, residues 719–948 are cytoplasmic; that stretch reads TALRCSVPAT…GNSTTDNSDQ (230 aa). The stretch at 734–737 is one PXXP 1 repeat; that stretch reads PGKP. Residues 734-892 form a 5 X 4 AA repeats of P-X-X-P region; sequence PGKPTLVCSS…PDKFIIPGSP (159 aa). Disordered regions lie at residues 755-801, 829-854, and 868-948; these read RQRV…RQPN, GPGG…EVSP, and KYGP…NSDQ. The segment covering 783–795 has biased composition (basic and acidic residues); it reads AEEKQLSESEYVG. 4 PXXP repeats span residues 797–800, 830–833, 871–874, and 889–892; these read PRQP, PGGP, PGNP, and PGSP. Over residues 907–921 the composition is skewed to basic and acidic residues; sequence DKSDFITFGKKEETK.

The protein localises to the cell membrane. Functionally, potential calcium-dependent cell-adhesion protein. May be involved in the establishment and maintenance of specific neuronal connections in the brain. The protein is Protocadherin alpha-2 (PCDHA2) of Pan troglodytes (Chimpanzee).